The following is a 168-amino-acid chain: Ribosome-binding factor A (168 aa).

The segment covering 122–136 (VRRDARPAGDDDPYR) has biased composition (basic and acidic residues). A disordered region spans residues 122–168 (VRRDARPAGDDDPYRRPRPAAGEVDELSEVDELSEVDEYGGTARQEG). Residues 144–159 (EVDELSEVDELSEVDE) show a composition bias toward acidic residues.

Belongs to the RbfA family. In terms of assembly, monomer. Binds 30S ribosomal subunits, but not 50S ribosomal subunits or 70S ribosomes.

It localises to the cytoplasm. Functionally, one of several proteins that assist in the late maturation steps of the functional core of the 30S ribosomal subunit. Associates with free 30S ribosomal subunits (but not with 30S subunits that are part of 70S ribosomes or polysomes). Required for efficient processing of 16S rRNA. May interact with the 5'-terminal helix region of 16S rRNA. The polypeptide is Ribosome-binding factor A (Frankia casuarinae (strain DSM 45818 / CECT 9043 / HFP020203 / CcI3)).